The sequence spans 105 residues: Iron-sulfur cluster assembly protein CyaY (105 aa).

Belongs to the frataxin family.

Involved in iron-sulfur (Fe-S) cluster assembly. May act as a regulator of Fe-S biogenesis. This is Iron-sulfur cluster assembly protein CyaY from Paraburkholderia phytofirmans (strain DSM 17436 / LMG 22146 / PsJN) (Burkholderia phytofirmans).